Here is a 91-residue protein sequence, read N- to C-terminus: UPF0386 protein CC_0226 (91 aa).

This sequence belongs to the UPF0386 family.

In Caulobacter vibrioides (strain ATCC 19089 / CIP 103742 / CB 15) (Caulobacter crescentus), this protein is UPF0386 protein CC_0226.